We begin with the raw amino-acid sequence, 456 residues long: Protein disulfide-isomerase TMX3 (456 aa).

The N-terminal stretch at 1–29 (MANAVGRRSWAALRLCAAVILLDLAVCKG) is a signal peptide. The Thioredoxin domain maps to 30 to 131 (FVEDLNESFK…KDDIIEFAHR (102 aa)). Residues 30–378 (FVEDLNESFK…TIVSIFKSSP (349 aa)) lie on the Lumenal side of the membrane. N35 is a glycosylation site (N-linked (GlcNAc...) asparagine). Residues C56 and C59 each act as nucleophile in the active site. An intrachain disulfide couples C56 to C59. 2 N-linked (GlcNAc...) asparagine glycosylation sites follow: N261 and N316. Residues 379-399 (LMGCFLFGLPLGVISIMCYGI) form a helical membrane-spanning segment. At 400-456 (YTADTDGGYIEERYEVSKSEMENQEQIEESKEQESSSGGSLAPTVQEPKDVLEKKKD) the chain is on the cytoplasmic side. Residues 416–456 (SKSEMENQEQIEESKEQESSSGGSLAPTVQEPKDVLEKKKD) are disordered. A compositionally biased stretch (basic and acidic residues) spans 446 to 456 (EPKDVLEKKKD). Positions 453 to 456 (KKKD) match the Di-lysine motif motif.

The protein belongs to the protein disulfide isomerase family.

Its subcellular location is the endoplasmic reticulum membrane. It carries out the reaction Catalyzes the rearrangement of -S-S- bonds in proteins.. Functionally, probable disulfide isomerase, which participates in the folding of proteins containing disulfide bonds. May act as a dithiol oxidase. Acts as a regulator of endoplasmic reticulum-mitochondria contact sites via its ability to regulate redox signals. The sequence is that of Protein disulfide-isomerase TMX3 (Tmx3) from Mus musculus (Mouse).